The sequence spans 51 residues: Cytoplasmic FMR1-interacting protein 1 (51 aa).

Belongs to the CYFIP family. In terms of assembly, component of the WAVE1 complex composed of ABI2, CYFIP1 or CYFIP2, BRK1, NCKAP1 and WASF1/WAVE1. Within the complex, a heterodimer containing NCKAP1 and CYFIP1 interacts with a heterotrimer formed by WAVE1, ABI2 and BRK1. Component of the CYFIP1-EIF4E-FMR1 complex which is composed of CYFIP, EIF4E and FMR1. Interacts with FMR1 but does not bind to related proteins FXR1 or FXR2. Interaction with EIF4E stimulates FMR1 binding. Component of the WAVE2 complex composed of ABI1, CYFIP1/SRA1, NCKAP1/NAP1 (NCKAP1l/HEM1 in hematopoietic cells) and WASF2/WAVE2. Interacts with the active GTP-bound form of RAC1. Interacts through its C-terminus with the C-terminus of DPYSL2/CRMP2 which is necessary for DPYSL2-induced axon outgrowth. Interacts with NYAP1, NYAP2 and MYO16. Interacts with TMEM108 (via N-terminus); the interaction associates TMEM108 with the WAVE1 complex.

The protein resides in the cytoplasm. Its subcellular location is the perinuclear region. It localises to the cell projection. It is found in the lamellipodium. The protein localises to the ruffle. The protein resides in the synapse. Its subcellular location is the synaptosome. Component of the CYFIP1-EIF4E-FMR1 complex which binds to the mRNA cap and mediates translational repression. In the CYFIP1-EIF4E-FMR1 complex this subunit is an adapter between EIF4E and FMR1. Promotes the translation repression activity of FMR1 in brain probably by mediating its association with EIF4E and mRNA. Regulates formation of membrane ruffles and lamellipodia. Plays a role in axon outgrowth. Binds to F-actin but not to RNA. Part of the WAVE complex that regulates actin filament reorganization via its interaction with the Arp2/3 complex. Actin remodeling activity is regulated by RAC1. Regulator of epithelial morphogenesis. As component of the WAVE1 complex, required for BDNF-NTRK2 endocytic trafficking and signaling from early endosomes. The chain is Cytoplasmic FMR1-interacting protein 1 from Bos taurus (Bovine).